The chain runs to 278 residues: 4-hydroxy-3-methylbut-2-enyl diphosphate reductase (278 aa).

[4Fe-4S] cluster is bound at residue Cys12. Residues His36 and His70 each contribute to the (2E)-4-hydroxy-3-methylbut-2-enyl diphosphate site. Dimethylallyl diphosphate-binding residues include His36 and His70. His36 and His70 together coordinate isopentenyl diphosphate. Residue Cys92 participates in [4Fe-4S] cluster binding. His120 lines the (2E)-4-hydroxy-3-methylbut-2-enyl diphosphate pocket. His120 contacts dimethylallyl diphosphate. His120 contributes to the isopentenyl diphosphate binding site. Glu122 functions as the Proton donor in the catalytic mechanism. Position 158 (Thr158) interacts with (2E)-4-hydroxy-3-methylbut-2-enyl diphosphate. Residue Cys186 participates in [4Fe-4S] cluster binding. Residues Ser214, Asn216, and Ser258 each contribute to the (2E)-4-hydroxy-3-methylbut-2-enyl diphosphate site. Positions 214, 216, and 258 each coordinate dimethylallyl diphosphate. Positions 214, 216, and 258 each coordinate isopentenyl diphosphate.

This sequence belongs to the IspH family. [4Fe-4S] cluster serves as cofactor.

The enzyme catalyses isopentenyl diphosphate + 2 oxidized [2Fe-2S]-[ferredoxin] + H2O = (2E)-4-hydroxy-3-methylbut-2-enyl diphosphate + 2 reduced [2Fe-2S]-[ferredoxin] + 2 H(+). It carries out the reaction dimethylallyl diphosphate + 2 oxidized [2Fe-2S]-[ferredoxin] + H2O = (2E)-4-hydroxy-3-methylbut-2-enyl diphosphate + 2 reduced [2Fe-2S]-[ferredoxin] + 2 H(+). It functions in the pathway isoprenoid biosynthesis; dimethylallyl diphosphate biosynthesis; dimethylallyl diphosphate from (2E)-4-hydroxy-3-methylbutenyl diphosphate: step 1/1. The protein operates within isoprenoid biosynthesis; isopentenyl diphosphate biosynthesis via DXP pathway; isopentenyl diphosphate from 1-deoxy-D-xylulose 5-phosphate: step 6/6. Catalyzes the conversion of 1-hydroxy-2-methyl-2-(E)-butenyl 4-diphosphate (HMBPP) into a mixture of isopentenyl diphosphate (IPP) and dimethylallyl diphosphate (DMAPP). Acts in the terminal step of the DOXP/MEP pathway for isoprenoid precursor biosynthesis. The sequence is that of 4-hydroxy-3-methylbut-2-enyl diphosphate reductase from Campylobacter lari (strain RM2100 / D67 / ATCC BAA-1060).